Here is a 640-residue protein sequence, read N- to C-terminus: Telomere repeat-binding protein 4 (640 aa).

The Ubiquitin-like domain occupies 343 to 422; it reads VKFSIKSLRI…LGNLGFTLEP (80 aa). Positions 442–464 are disordered; it reads TDSTKLSERSAASPALETGIPLP. The region spanning 530–589 is the HTH myb-type domain; sequence SQRRTRRPFSVTEVEALVSAVEEVGTGRWRDVKLRSFENASHRTYVDLKDKWKTLVHTAS. A DNA-binding region (H-T-H motif) is located at residues 558 to 585; it reads WRDVKLRSFENASHRTYVDLKDKWKTLV.

As to quaternary structure, homomultimer. Interacts with SNL1 (via PAH2). Interacts with STO. As to expression, expressed ubiquitously. Highest expression in flowers and roots.

It localises to the nucleus. In terms of biological role, binds specifically to the plant telomeric double-stranded DNA sequences 5'-TTTAGGG-3'. At least 2 repeats of telomeric sequences are required for binding. Induces DNA bending. The polypeptide is Telomere repeat-binding protein 4 (TRP4) (Arabidopsis thaliana (Mouse-ear cress)).